Consider the following 285-residue polypeptide: Acetyl-coenzyme A carboxylase carboxyl transferase subunit beta (285 aa).

Residues Gly24–Ala285 form the CoA carboxyltransferase N-terminal domain.

This sequence belongs to the AccD/PCCB family. In terms of assembly, acetyl-CoA carboxylase is a heterohexamer composed of biotin carboxyl carrier protein (AccB), biotin carboxylase (AccC) and two subunits each of ACCase subunit alpha (AccA) and ACCase subunit beta (AccD).

It is found in the cytoplasm. It catalyses the reaction N(6)-carboxybiotinyl-L-lysyl-[protein] + acetyl-CoA = N(6)-biotinyl-L-lysyl-[protein] + malonyl-CoA. Its pathway is lipid metabolism; malonyl-CoA biosynthesis; malonyl-CoA from acetyl-CoA: step 1/1. Component of the acetyl coenzyme A carboxylase (ACC) complex. Biotin carboxylase (BC) catalyzes the carboxylation of biotin on its carrier protein (BCCP) and then the CO(2) group is transferred by the transcarboxylase to acetyl-CoA to form malonyl-CoA. This Christiangramia forsetii (strain DSM 17595 / CGMCC 1.15422 / KT0803) (Gramella forsetii) protein is Acetyl-coenzyme A carboxylase carboxyl transferase subunit beta.